A 435-amino-acid chain; its full sequence is Serine--tRNA ligase (435 aa).

Position 237–239 (237–239 (TAE)) interacts with L-serine. Position 268 to 270 (268 to 270 (RSE)) interacts with ATP. L-serine is bound at residue Glu291. Residue 355 to 358 (EISS) participates in ATP binding. An L-serine-binding site is contributed by Ser390.

Belongs to the class-II aminoacyl-tRNA synthetase family. Type-1 seryl-tRNA synthetase subfamily. In terms of assembly, homodimer. The tRNA molecule binds across the dimer.

It is found in the cytoplasm. It carries out the reaction tRNA(Ser) + L-serine + ATP = L-seryl-tRNA(Ser) + AMP + diphosphate + H(+). The enzyme catalyses tRNA(Sec) + L-serine + ATP = L-seryl-tRNA(Sec) + AMP + diphosphate + H(+). The protein operates within aminoacyl-tRNA biosynthesis; selenocysteinyl-tRNA(Sec) biosynthesis; L-seryl-tRNA(Sec) from L-serine and tRNA(Sec): step 1/1. Catalyzes the attachment of serine to tRNA(Ser). Is also able to aminoacylate tRNA(Sec) with serine, to form the misacylated tRNA L-seryl-tRNA(Sec), which will be further converted into selenocysteinyl-tRNA(Sec). The polypeptide is Serine--tRNA ligase (Lactobacillus delbrueckii subsp. bulgaricus (strain ATCC BAA-365 / Lb-18)).